Reading from the N-terminus, the 467-residue chain is Acetaldehyde dehydrogenase (acetylating) EutE (467 aa).

The interval 1–19 (MNQQDIEQVVKAVLLKMKD) is targets protein to the BMC.

It belongs to the EutE/PduP family. As to quaternary structure, interacts with EutS, which targets it to the interior of the BMC.

It localises to the bacterial microcompartment. The catalysed reaction is acetaldehyde + NAD(+) + CoA = acetyl-CoA + NADH + H(+). The protein operates within amine and polyamine degradation; ethanolamine degradation. Its function is as follows. Acts as the second step in ethanolamine degradation by converting acetaldehyde into acetyl-CoA. Has a very strong preference for NAD(+) over NADP(+) in both catalytic directions. May play a role in bacterial microcompartment (BMC) assembly or maintenance. Directly targeted to the BMC. In terms of biological role, expression of the eut operon allows this bacteria to use ethanolamine (EA) as a carbon, nitrogen and energy source. It relies on cobalamin (vitamin B12) both as a cofactor for the ethanolamine ammonia-lyase (EAL) activity and to induce the operon. EA enhances bacterial survival in macrophages in a concentration-dependent manner, suggesting it is an important nutrient during infection. The polypeptide is Acetaldehyde dehydrogenase (acetylating) EutE (Salmonella typhimurium (strain LT2 / SGSC1412 / ATCC 700720)).